Here is a 510-residue protein sequence, read N- to C-terminus: MDIRAAEISAILKDQIKNFGQEAEVSEVGQVLSVGDGIARVYGLDNIQAGEMVEFENGTRGMALNLETDNVGIVIFGADREIKEGQTVKRTRAIVDAPVGKGLLGRVVDALGNPIDGKGPIQATERKRVDVKAPGIIPRKSVNEPMATGLKSIDALIPVGRGQRELIIGDRQTGKTAIALDTILNQKPLNVAGAPEGQKLYCVYVAIGQKRSTVAQFVKVLEEQGALEYSIIVAATASDPAPMQYIAPFTGCTMGEYFRDNGMHAVIIYDDLSKQAVAYRQMSLLLRRPPGREAYPGDVFYLHSRLLERAAKLNDDHGNGSLTALPVIETQANDVSAYIPTNVISITDGQIFLETDLFFQGIRPAVNVGLSVSRVGSSAQTKAMKKVAGKIKGELAQYREMAAFAQFGSDLDASTQRLLNRGSRLTELLKQPQFSPLKMEEQVCVIWAGTNGYLDKLPLGKVRAFEDGLLSLLRGKNVEILNTIRESRDLSDDTAAKLRSAVDGYAKTFV.

169–176 (GDRQTGKT) contributes to the ATP binding site.

It belongs to the ATPase alpha/beta chains family. In terms of assembly, F-type ATPases have 2 components, CF(1) - the catalytic core - and CF(0) - the membrane proton channel. CF(1) has five subunits: alpha(3), beta(3), gamma(1), delta(1), epsilon(1). CF(0) has three main subunits: a(1), b(2) and c(9-12). The alpha and beta chains form an alternating ring which encloses part of the gamma chain. CF(1) is attached to CF(0) by a central stalk formed by the gamma and epsilon chains, while a peripheral stalk is formed by the delta and b chains.

The protein resides in the cell inner membrane. The catalysed reaction is ATP + H2O + 4 H(+)(in) = ADP + phosphate + 5 H(+)(out). Its function is as follows. Produces ATP from ADP in the presence of a proton gradient across the membrane. The alpha chain is a regulatory subunit. The sequence is that of ATP synthase subunit alpha from Nitrobacter hamburgensis (strain DSM 10229 / NCIMB 13809 / X14).